A 347-amino-acid polypeptide reads, in one-letter code: Farnesyl pyrophosphate synthase (347 aa).

Isopentenyl diphosphate-binding residues include lysine 50, arginine 53, and glutamine 88. 2 residues coordinate Mg(2+): aspartate 95 and aspartate 99. Arginine 104 is a binding site for dimethylallyl diphosphate. Residue arginine 105 coordinates isopentenyl diphosphate. Dimethylallyl diphosphate contacts are provided by lysine 192, threonine 193, glutamine 232, lysine 249, and lysine 258.

It belongs to the FPP/GGPP synthase family. Interacts with spo9. Requires Mg(2+) as cofactor.

The protein localises to the cytoplasm. It localises to the nucleus. The enzyme catalyses isopentenyl diphosphate + dimethylallyl diphosphate = (2E)-geranyl diphosphate + diphosphate. The catalysed reaction is isopentenyl diphosphate + (2E)-geranyl diphosphate = (2E,6E)-farnesyl diphosphate + diphosphate. It participates in isoprenoid biosynthesis; farnesyl diphosphate biosynthesis; farnesyl diphosphate from geranyl diphosphate and isopentenyl diphosphate: step 1/1. Its pathway is isoprenoid biosynthesis; geranyl diphosphate biosynthesis; geranyl diphosphate from dimethylallyl diphosphate and isopentenyl diphosphate: step 1/1. Its function is as follows. Farnesyl pyrophosphate synthase; part of the second module of ergosterol biosynthesis pathway that includes the middle steps of the pathway. Fps1 catalyzes the sequential condensation of isopentenyl pyrophosphate with dimethylallyl pyrophosphate, and then with the resultant geranylpyrophosphate to the ultimate product farnesyl pyrophosphate. The second module is carried out in the vacuole and involves the formation of farnesyl diphosphate, which is also an important intermediate in the biosynthesis of ubiquinone, dolichol, heme and prenylated proteins. Activity by the mevalonate kinase erg12 first converts mevalonate into 5-phosphomevalonate. 5-phosphomevalonate is then further converted to 5-diphosphomevalonate by the phosphomevalonate kinase erg8. The diphosphomevalonate decarboxylase mvd1 then produces isopentenyl diphosphate. The isopentenyl-diphosphate delta-isomerase idi1 then catalyzes the 1,3-allylic rearrangement of the homoallylic substrate isopentenyl (IPP) to its highly electrophilic allylic isomer, dimethylallyl diphosphate (DMAPP). Finally the farnesyl diphosphate synthase fps1 catalyzes the sequential condensation of isopentenyl pyrophosphate with dimethylallyl pyrophosphate, and then with the resultant geranylpyrophosphate to the ultimate product farnesyl pyrophosphate. The protein is Farnesyl pyrophosphate synthase of Schizosaccharomyces pombe (strain 972 / ATCC 24843) (Fission yeast).